The following is a 2663-amino-acid chain: Ankyrin repeat domain-containing protein 11 (2663 aa).

2 disordered regions span residues 1–90 and 128–169; these read MPKG…KEPV and SANS…ERGE. Basic and acidic residues-rich tracts occupy residues 21-54 and 69-90; these read MVEK…VRER and EQKD…KEPV. Residues 128–155 are compositionally biased toward polar residues; that stretch reads SANSPVDTTPKHPSQSTVCQKGTPNSAS. A compositionally biased stretch (basic and acidic residues) spans 156-169; it reads KTKDKVNKRNERGE. ANK repeat units lie at residues 167 to 196, 200 to 229, 233 to 262, and 266 to 292; these read RGET…DVNV, AGWT…EVNT, DDDT…NPQQ, and KGET…YTSS. A Phosphoserine modification is found at serine 276. Disordered stretches follow at residues 289–380, 398–647, and 723–783; these read YTSS…SNSF, APKK…GQCS, and DTNK…NDLK. A compositionally biased stretch (acidic residues) spans 295–305; sequence SSTESSEEEDA. Over residues 309–320 the composition is skewed to polar residues; sequence APSSSVDGNNTD. Basic and acidic residues predominate over residues 356 to 376; it reads DRVPPVDDKHLLKKDYRKETK. Position 408 is a phosphoserine (serine 408). A Phosphothreonine modification is found at threonine 410. A Phosphoserine modification is found at serine 411. Residues 438–451 are compositionally biased toward basic and acidic residues; sequence KTREPSNAKQQKEK. The segment covering 452 to 462 has biased composition (basic residues); it reads NKVKKKRKKET. Basic and acidic residues predominate over residues 463–477; it reads KGREVRFGKRSDKFC. Acidic residues predominate over residues 481 to 493; it reads SESESSESGEDDR. A compositionally biased stretch (low complexity) spans 513 to 531; the sequence is SLFSSLSASSTSSHGSSAA. The segment covering 539-550 has biased composition (basic and acidic residues); it reads TDQHTKHWRTDN. Residues 551 to 562 show a composition bias toward polar residues; it reads WKTISSPAWSEV. A compositionally biased stretch (low complexity) spans 576-588; that stretch reads ESDYSSEGSSVES. Composition is skewed to basic residues over residues 591–602 and 629–641; these read PVRKRQEHRKRA and VKKH…HKNK. Serine 834 is modified (phosphoserine). 4 stretches are compositionally biased toward basic and acidic residues: residues 881 to 928, 935 to 1043, 1059 to 1090, and 1099 to 1112; these read VKED…EKHK, SEKD…KSIL, KKDT…KEKA, and FSEK…KEKS. Disordered stretches follow at residues 881 to 1043 and 1059 to 1393; these read VKED…KSIL and KKDT…GQYE. Serine 1079 is modified (phosphoserine). The residue at position 1120 (threonine 1120) is a Phosphothreonine. Serine 1123 bears the Phosphoserine mark. Basic and acidic residues-rich tracts occupy residues 1142 to 1301, 1330 to 1347, and 1359 to 1393; these read DLPR…DKIS, GDDK…LKEK, and KSHD…GQYE. Threonine 1419 bears the Phosphothreonine mark. Composition is skewed to basic and acidic residues over residues 1424–1446, 1466–1545, 1556–1574, 1587–1597, and 1605–1639; these read STEK…KELK, REKW…KGDP, APSK…KLLG, LSQKDLEIEER, and MKQM…DIPA. The disordered stretch occupies residues 1424–1710; that stretch reads STEKKDKNDS…TGVPTPTSVL (287 aa). Serine 1509 carries the post-translational modification Phosphoserine. A Phosphoserine modification is found at serine 1692. The span at 1698–1710 shows a compositional bias: polar residues; that stretch reads SRPTGVPTPTSVL. Serine 1792 bears the Phosphoserine mark. The tract at residues 1814–1836 is disordered; that stretch reads SVPAASSYDSPMPPSMEDRAPLP. Serine 1847 carries the post-translational modification Phosphoserine. Phosphotyrosine occurs at positions 1850 and 1851. Residues serine 1852, serine 1859, and serine 1990 each carry the phosphoserine modification. 2 disordered regions span residues 1988–2019 and 2131–2406; these read PESP…PAPP and LDLG…STQQ. 2 stretches are compositionally biased toward low complexity: residues 2310 to 2324 and 2391 to 2406; these read IQPE…AEAP and RSTQ…STQQ. An important for protein degradation region spans residues 2369 to 2663; the sequence is AKARGSEDDD…VNDDFVLLPA (295 aa).

As to quaternary structure, interacts with the PAS region of the p160 coactivators. Subject to proteasomal degradation which is probably essential to regulate its activity.

The protein resides in the nucleus. Functionally, chromatin regulator which modulates histone acetylation and gene expression in neural precursor cells. May recruit histone deacetylases (HDACs) to the p160 coactivators/nuclear receptor complex to inhibit ligand-dependent transactivation. Has a role in proliferation and development of cortical neural precursors. May also regulate bone homeostasis. This Homo sapiens (Human) protein is Ankyrin repeat domain-containing protein 11 (ANKRD11).